We begin with the raw amino-acid sequence, 2494 residues long: Nuclear receptor corepressor 1 (2494 aa).

Positions 1–33 (MSSSGYPPNQGAFSTEQGRYSSHPVQYTFPSSR) are enriched in polar residues. Disordered regions lie at residues 1–38 (MSSS…QQEF), 53–106 (LLQQ…PRLD), 134–170 (SEVK…KLSK), and 198–222 (QQQL…PVEQ). The segment covering 71 to 82 (PVSDRPQDRRQG) has biased composition (basic and acidic residues). Over residues 83–92 (YEQQYHSVTQ) the composition is skewed to polar residues. Composition is skewed to basic and acidic residues over residues 93–106 (NEHE…PRLD), 134–148 (SEVK…KHET), and 204–213 (EAAKPPEPEK). Residues 154–304 (SGQPGEEQEA…REQNICQRYD (151 aa)) are interaction with tbl1xr1. The stretch at 168–208 (LSKEELIQSMDRVDREIAKVEQQILKLKKKQQQLEEEAAKP) forms a coiled coil. The region spanning 427-478 (QFMNVWTDHEKEIFKEKFVQHPKNFGLIASYLERKTVSDCVLYYYLTKKNEN) is the SANT 1 domain. Disordered regions lie at residues 488–638 (PKRR…VEHG), 671–913 (NLLQ…LDSK), 981–1007 (RQRQ…PNMD), 1081–1124 (GARL…GTPG), 1413–1434 (IHEI…ESSR), 1488–1585 (MGER…TQRE), 1745–1845 (LAFP…QESI), and 1912–1987 (EVVK…AHTK). Composition is skewed to basic and acidic residues over residues 502 to 525 (AQEE…KEEE) and 535 to 548 (KEEL…RTDA). Positions 502–549 (AQEEKEIEKVEEEKAERNDKKEEERREEEEKEEKEELRDGTKDRTDAI) form a coiled coil. The span at 582–616 (ASEAAAAANAASTATTAPATTTSTTATTTTAALVP) shows a compositional bias: low complexity. A compositionally biased stretch (pro residues) spans 617 to 629 (VAPPPEEPTPPPT). The region spanning 622-668 (EEPTPPPTQEQSLVEHGRNWGAIAKMVGSKSESQCKNFYFNYKRRHN) is the SANT 2 domain. Positions 692-702 (QCESVASTVSA) are enriched in polar residues. The stretch at 698–726 (STVSAQEDEENEASNEEENAEDSEGAENS) forms a coiled coil. The span at 703-722 (QEDEENEASNEEENAEDSEG) shows a compositional bias: acidic residues. Residues 723–741 (AENSSDTESAPSPSPAEAA) are compositionally biased toward low complexity. The span at 766 to 779 (ASKSVSDSSPTPTV) shows a compositional bias: polar residues. A compositionally biased stretch (basic and acidic residues) spans 829–864 (AEPDEVESKPSESAEVKIEEDTKDQDMERLMDRAEA). Polar residues-rich tracts occupy residues 881–892 (ESQSDNDSSATC), 993–1004 (MSASPGNMSKSP), and 1104–1124 (ATSS…GTPG). Residues 1488–1504 (MGERSKYEDTKSSEAIR) are compositionally biased toward basic and acidic residues. The segment covering 1508 to 1519 (TSVVSSGPSVLR) has biased composition (polar residues). Low complexity predominate over residues 1548–1561 (PSPMSRSSPMARSA). A coiled-coil region spans residues 1771 to 1810 (VSAERERERERDRERDREREKEQRERERDRERERERLAAA). A compositionally biased stretch (basic and acidic residues) spans 1773 to 1807 (AERERERERDRERDREREKEQRERERDRERERERL). Residues 1835-1845 (PSPSVRAQESI) are compositionally biased toward polar residues. Residues 1914–1935 (VKPKEMKHDPARSEESLSRRNV) show a composition bias toward basic and acidic residues. Positions 1953–1972 (QSPYTSSSFSGSKSQGQPSP) are enriched in low complexity. The segment covering 1978-1987 (AGKEKTAHTK) has biased composition (basic and acidic residues). Positions 2008–2012 (IDVII) match the CORNR box 1 motif. The segment at 2018-2105 (SDKDGRDRNS…PSPQQTIPGH (88 aa)) is disordered. Low complexity predominate over residues 2027-2036 (SQSSDSSSSH). Over residues 2039–2048 (HRYDAPRDTI) the composition is skewed to basic and acidic residues. Residues 2088-2102 (RYRQQQESPSPQQTI) are compositionally biased toward polar residues. The CORNR box 2 motif lies at 2119–2123 (ICQII). Polar residues predominate over residues 2135-2177 (QALQQPPASTFQSTNPSSTPVRTKASSRFSPESQVQPVHNQRP). A disordered region spans residues 2135 to 2216 (QALQQPPAST…YEPISPPQAP (82 aa)). A compositionally biased stretch (basic and acidic residues) spans 2186–2205 (VLDRPRGRPGKSPDRGHISE). The short motif at 2322–2326 (LEDII) is the CORNR box 3 element. Disordered stretches follow at residues 2346–2413 (GVAQ…SVHS) and 2446–2494 (MLNS…DSDE). The span at 2376–2390 (HKQKLISKYGSRKTK) shows a compositional bias: basic residues. 2 stretches are compositionally biased toward polar residues: residues 2446-2472 (MLNS…QQSR) and 2485-2494 (QYETLSDSDE).

Belongs to the N-CoR nuclear receptor corepressors family. Forms a large corepressor complex that contains sin3a/b, histone deacetylases hdac1 and hdac2, rbbp4 and possibly rbbp7. Interacts with the thyroid receptor (TR, composed of rxra and thrb) and the retinoid acid receptor (RAR, composed of rxra and rara) in the absence of ligand. Interacts with tbl1xr1. Interacts with zbtb33/kaiso.

It is found in the nucleus. Its function is as follows. Mediates transcriptional repression by certain nuclear receptors. Participates in complexes which promote histone deacetylation and the formation of repressive chromatin structures which may impede access by the basal transcription machinery. In association with hdac3, may play a role in the regulation of the circadian clock. In Xenopus tropicalis (Western clawed frog), this protein is Nuclear receptor corepressor 1 (ncor1).